We begin with the raw amino-acid sequence, 699 residues long: Zinc finger protein 782 (699 aa).

The region spanning 8 to 79 is the KRAB domain; the sequence is VSFQDVTVEF…EKEKGFLSRN (72 aa). The segment at 75-95 is disordered; that stretch reads FLSRNSPEDSQPDEISEKSPE. The segment at 279–307 adopts a C2H2-type 1; degenerate zinc-finger fold; sequence CFCRITHKTLTGGKSFSQKSHIREHHRVH. The C2H2-type 2; degenerate zinc-finger motif lies at 316 to 332; sequence GKSFNRNSTLPVHQRTH. The segment at 337-360 adopts a C2H2-type 3; degenerate zinc-finger fold; that stretch reads YSDYHPCTETFSYQSTFSVHQKVH. The C2H2-type 4; degenerate zinc-finger motif lies at 366–388; sequence YEYNECGKSCSMNSHLIWPQKSH. 11 C2H2-type zinc fingers span residues 394–416, 422–444, 450–472, 478–500, 506–528, 534–556, 562–584, 590–612, 618–640, 646–668, and 674–696; these read YECPECGKAFSEKSRLRKHQRTH, YKCDGCDKAFSAKSGLRIHQRTH, FECHECGKSFNYKSILIVHQRTH, FECNECGKSFSHMSGLRNHRRTH, YKCDECGKAFKLKSGLRKHHRTH, YKCNQCGKAFGQKSQLRGHHRIH, YKCNHCGEAFSQKSNLRVHHRTH, YQCEECGKTFRQKSNLRGHQRTH, YECNECGKAFSEKSVLRKHQRTH, YNCNQCGEAFSQKSNLRVHQRTH, and YKCDKCGRTFSQKSSLREHQKAH.

It belongs to the krueppel C2H2-type zinc-finger protein family.

It is found in the nucleus. In terms of biological role, may be involved in transcriptional regulation. This is Zinc finger protein 782 (ZNF782) from Homo sapiens (Human).